A 438-amino-acid polypeptide reads, in one-letter code: MAHELTVQELEKFSADFNKNPKNKVVARAAQRSGVLEASYNDRVQSELTRVFSTELDTDNVTNQKHSGRCWLFATLNVLRHEFGKKYKAKDFTFSQAYNFFWDKIERANMFYNRILDSADMPLDSRQVKTDLDFAGTDGGQFQMAAALVEKYGVVPSYAMPETFNTNDTTGFATALGDKLKKDALVLRKLKQEGKDDEIKKTREKFLSEVYQMTAIAVGEPPKKFDLEYRDDDKKYHLEKDLTPLEFLHKYLGGVDFDDYVVLTNAPDHEYDKLYGLPAEDNVSGSIRIKLLNVPMEYLTAASIAQLKDGEAVWFGNDVLRQMDRKTGYLDTNLYKLDDLFGVDLKMSKADRLKTGVGEVSHAMTLVGVDEDNGEVRQWKVENSWGDKSGAKGYYVMNNEWFNDYVYEVVVHKKYLTDKQKELAEGPITDLPAWDSLA.

Catalysis depends on residues C70, H362, and N383.

The protein belongs to the peptidase C1 family.

Its subcellular location is the cytoplasm. Functionally, can hydrolyze internal peptide bonds in Met-enkephalin and bradykinin; however, hydrolysis of alpha-, beta-, and kappa-caseins is not detected. In Lactobacillus helveticus (Lactobacillus suntoryeus), this protein is Aminopeptidase E (pepE).